The following is a 188-amino-acid chain: Sulfopyruvate decarboxylase subunit beta (188 aa).

This sequence belongs to the TPP enzyme family. In terms of assembly, heterododecamer composed of 6 subunits alpha and 6 subunits beta. It depends on thiamine diphosphate as a cofactor.

It catalyses the reaction 3-sulfopyruvate + H(+) = sulfoacetaldehyde + CO2. It functions in the pathway cofactor biosynthesis; coenzyme M biosynthesis; sulfoacetaldehyde from phosphoenolpyruvate and sulfite: step 4/4. With respect to regulation, inhibited by oxygen when heated in air at 80 degrees Celsius. The enzyme is reactivated by addition of dithionite. Involved in the biosynthesis of the coenzyme M (2-mercaptoethanesulfonic acid). Catalyzes the decarboxylation of sulfopyruvate to sulfoacetaldehyde. The protein is Sulfopyruvate decarboxylase subunit beta of Methanocaldococcus jannaschii (strain ATCC 43067 / DSM 2661 / JAL-1 / JCM 10045 / NBRC 100440) (Methanococcus jannaschii).